The primary structure comprises 517 residues: Forkhead box protein N4 (517 aa).

The fork-head DNA-binding region spans 193–289 (KPIYSYSCLI…EEMHKWKRKD (97 aa)). Disordered stretches follow at residues 365–398 (VQPQAHLAPDSPAPAQTPPLHALPDLSPSPLPHP) and 497–517 (SGTSSSSQYLGAQGNKPIALL).

Its subcellular location is the nucleus. Its function is as follows. Transcription factor essential for neural and some non-neural tissues development, such as retina and lung respectively. Binds to an 11-bp consensus sequence containing the invariant tetranucleotide 5'-ACGC-3'. During development of the central nervous system, is required to specify the amacrine and horizontal cell fates from multipotent retinal progenitors while suppressing the alternative photoreceptor cell fates through activating DLL4-NOTCH signaling. Also acts synergistically with ASCL1/MASH1 to activate DLL4-NOTCH signaling and drive commitment of p2 progenitors to the V2b interneuron fates during spinal cord neurogenesis. In development of non-neural tissues, plays an essential role in the specification of the atrioventricular canal and is indirectly required for patterning the distal airway during lung development. This Homo sapiens (Human) protein is Forkhead box protein N4 (FOXN4).